The sequence spans 177 residues: MFRAGSSKRFLRNTLIAISWVPVLLTINNNVVHIAQVKGTSMQPTLNPQTETLATDWVLLWKFGVKNPSNLSRDDIILFKAPTNPRKVYCKRVKGLPFDTIDTKFPYPKPQVNLPRGHIWVEGDNYFHSIDSNTFGPISSGLVIGKAITIVWPPSRWGTDLKLSTGRDCISKRAILE.

Residues S41 and K91 contribute to the active site. Residues 134 to 152 traverse the membrane as a helical segment; sequence TFGPISSGLVIGKAITIVW.

Belongs to the peptidase S26 family. IMP2 subfamily. Component of the mitochondrial inner membrane peptidase (IMP) complex which at least consists of IMP1, IMP2 and SOM1. Post-translationally, the N-terminus is blocked.

Its subcellular location is the mitochondrion inner membrane. In terms of biological role, catalytic component of the mitochondrial inner membrane peptidase (IMP) complex. IMP catalyzes the removal of signal peptides required for the targeting of proteins from the mitochondrial matrix, across the inner membrane, into the inter-membrane space. The two catalytic IMP subunits seem to have non-overlapping substrate specificities. IMP2 substrates include nuclear encoded CYB2, mitochondrially encoded COX2 and cytochrome c1. Required for the stability of IMP1. This chain is Mitochondrial inner membrane protease subunit 2 (IMP2), found in Saccharomyces cerevisiae (strain ATCC 204508 / S288c) (Baker's yeast).